Reading from the N-terminus, the 255-residue chain is tRNA uridine(34) hydroxylase (255 aa).

Positions 131–225 constitute a Rhodanese domain; that stretch reads AAPDTLVLDT…YLEEVPEAQS (95 aa). Residue cysteine 185 is the Cysteine persulfide intermediate of the active site.

Belongs to the TrhO family.

It catalyses the reaction uridine(34) in tRNA + AH2 + O2 = 5-hydroxyuridine(34) in tRNA + A + H2O. In terms of biological role, catalyzes oxygen-dependent 5-hydroxyuridine (ho5U) modification at position 34 in tRNAs. The protein is tRNA uridine(34) hydroxylase of Bradyrhizobium diazoefficiens (strain JCM 10833 / BCRC 13528 / IAM 13628 / NBRC 14792 / USDA 110).